Here is a 116-residue protein sequence, read N- to C-terminus: Ly-6/neurotoxin-like protein 1 (116 aa).

An N-terminal signal peptide occupies residues 1 to 20 (MTPLLTLFLVALIGLPLAQA). The UPAR/Ly6 domain occupies 21 to 105 (LDCHVCAYNG…FAAPATLALA (85 aa)). 5 disulfide bridges follow: Cys-23–Cys-46, Cys-26–Cys-33, Cys-39–Cys-64, Cys-68–Cys-85, and Cys-86–Cys-91. Asn-92 carries GPI-anchor amidated asparagine lipidation. The propeptide at 93–116 (GAGFAAPATLALAPILLATLWGLL) is removed in mature form.

Interacts with nAChRs containing alpha-4:beta-2 (CHRNA4:CHRNB2) and alpha-7 (CHRNA7) subunits. Interacts with CHRNA4 probably in the endoplasmic reticulum prior to nAChR pentameric assembly. Interacts with KCNA2/Potassium voltage-gated channel subfamily A member 2.

Its subcellular location is the cell membrane. It is found in the cell projection. The protein localises to the dendrite. It localises to the endoplasmic reticulum. Its function is as follows. Acts in different tissues through interaction to nicotinic acetylcholine receptors (nAChRs). The proposed role as modulator of nAChR activity seems to be dependent on the nAChR subtype and stoichiometry, and to involve an effect on nAChR trafficking and its cell surface expression, and on single channel properties of the nAChR inserted in the plasma membrane. Modulates functional properties of nicotinic acetylcholine receptors (nAChRs) to prevent excessive excitation, and hence neurodegeneration. Enhances desensitization by increasing both the rate and extent of desensitization of alpha-4:beta-2-containing nAChRs and slowing recovery from desensitization. Promotes large amplitude ACh-evoked currents through alpha-4:beta-2 nAChRs. Is involved in regulation of the nAChR pentameric assembly in the endoplasmic reticulum. Shifts stoichiometry from high sensitivity alpha-4(2):beta-2(3) to low sensitivity alpha-4(3):beta-2(2) nAChR. In vitro modulates alpha-3:beta-4-containing nAChRs. Reduces cell surface expression of (alpha-3:beta-4)(2):beta-4 and (alpha-3:beta-4)(2):alpha-5 nAChRs suggesting an interaction with nAChR alpha-3(-):(+)beta-4 subunit interfaces and an allosteric mode. Corresponding single channel effects characterized by decreased unitary conductance, altered burst proportions and enhanced desensitization/inactivation seem to depend on nAChR alpha:alpha subunit interfaces and are greater in (alpha-3:beta-2)(2):alpha-3 when compared to (alpha-3:beta-2)(2):alpha-5 nAChRs. Prevents plasticity in the primary visual cortex late in life. The protein is Ly-6/neurotoxin-like protein 1 of Saimiri boliviensis boliviensis (Bolivian squirrel monkey).